Reading from the N-terminus, the 298-residue chain is Zinc import ATP-binding protein ZnuC (298 aa).

The ABC transporter domain occupies 17-232 (IELRNAGVYR…PEYVRLFGSR (216 aa)). 49-56 (GPNGAGKS) provides a ligand contact to ATP. The segment at 273–298 (RGHCHVEDGHHHDHEHHHHEGGQPRA) is disordered. Positions 276–298 (CHVEDGHHHDHEHHHHEGGQPRA) are enriched in basic and acidic residues.

It belongs to the ABC transporter superfamily. Zinc importer (TC 3.A.1.15.5) family. The complex is composed of two ATP-binding proteins (ZnuC), two transmembrane proteins (ZnuB) and a solute-binding protein (ZnuA).

The protein localises to the cell inner membrane. It carries out the reaction Zn(2+)(out) + ATP(in) + H2O(in) = Zn(2+)(in) + ADP(in) + phosphate(in) + H(+)(in). Part of the ABC transporter complex ZnuABC involved in zinc import. Responsible for energy coupling to the transport system. This is Zinc import ATP-binding protein ZnuC from Brucella suis biovar 1 (strain 1330).